The chain runs to 685 residues: Augmin complex subunit dgt5 (685 aa).

2 coiled-coil regions span residues 87–165 (LQRY…NKIQ) and 342–379 (NMRNFNRSQNEFLREQIEQLRLELDAGAKQLENHDLKL).

As to quaternary structure, component of the augmin complex composed of dgt2, dgt3, dgt4, dgt5, dgt6, msd1, msd5 and wac. The complex interacts directly or indirectly with microtubules and is required for centrosome-independent generation of spindle microtubules.

The protein localises to the cytoplasm. It localises to the cytoskeleton. It is found in the spindle. Its subcellular location is the chromosome. The protein resides in the centromere. The protein localises to the kinetochore. It localises to the microtubule organizing center. It is found in the centrosome. As part of the augmin complex, plays a role in centrosome-independent generation of spindle microtubules. The complex is required for mitotic spindle assembly through its involvement in localizing gamma-tubulin to spindle microtubules. This Drosophila melanogaster (Fruit fly) protein is Augmin complex subunit dgt5.